Here is a 588-residue protein sequence, read N- to C-terminus: ATP-dependent lipid A-core flippase (588 aa).

A run of 6 helical transmembrane segments spans residues 23–43 (FWPV…IDAG), 56–76 (FITI…IGIT), 141–161 (DALT…TVMM), 162–182 (VICW…GIIV), 257–277 (LVIA…STVI), and 278–298 (TISA…IKPM). Residues 28-310 (LLGVLANILY…LTTLNATIQR (283 aa)) form the ABC transmembrane type-1 domain. In terms of domain architecture, ABC transporter spans 342-576 (IEFKHVYHAY…DGHYAQLYKV (235 aa)). 375–382 (GHSGSGKT) contacts ATP.

The protein belongs to the ABC transporter superfamily. Lipid exporter (TC 3.A.1.106) family. Homodimer.

The protein resides in the cell inner membrane. It catalyses the reaction ATP + H2O + lipid A-core oligosaccharideSide 1 = ADP + phosphate + lipid A-core oligosaccharideSide 2.. Involved in lipopolysaccharide (LPS) biosynthesis. Translocates lipid A-core from the inner to the outer leaflet of the inner membrane. Transmembrane domains (TMD) form a pore in the inner membrane and the ATP-binding domain (NBD) is responsible for energy generation. This is ATP-dependent lipid A-core flippase from Legionella pneumophila (strain Lens).